A 390-amino-acid chain; its full sequence is Ribosomal RNA large subunit methyltransferase G (390 aa).

Belongs to the methyltransferase superfamily. RlmG family.

The protein resides in the cytoplasm. It carries out the reaction guanosine(1835) in 23S rRNA + S-adenosyl-L-methionine = N(2)-methylguanosine(1835) in 23S rRNA + S-adenosyl-L-homocysteine + H(+). Specifically methylates the guanine in position 1835 (m2G1835) of 23S rRNA. The polypeptide is Ribosomal RNA large subunit methyltransferase G (Alcanivorax borkumensis (strain ATCC 700651 / DSM 11573 / NCIMB 13689 / SK2)).